A 32-amino-acid chain; its full sequence is Photosystem II reaction center protein T (32 aa).

Residues 3–23 (ALVYTFLLVATLGIIFFAIFF) form a helical membrane-spanning segment.

It belongs to the PsbT family. In terms of assembly, PSII is composed of 1 copy each of membrane proteins PsbA, PsbB, PsbC, PsbD, PsbE, PsbF, PsbH, PsbI, PsbJ, PsbK, PsbL, PsbM, PsbT, PsbY, PsbZ, Psb30/Ycf12, at least 3 peripheral proteins of the oxygen-evolving complex and a large number of cofactors. It forms dimeric complexes.

It is found in the plastid. The protein localises to the chloroplast thylakoid membrane. In terms of biological role, found at the monomer-monomer interface of the photosystem II (PS II) dimer, plays a role in assembly and dimerization of PSII. PSII is a light-driven water plastoquinone oxidoreductase, using light energy to abstract electrons from H(2)O, generating a proton gradient subsequently used for ATP formation. The protein is Photosystem II reaction center protein T of Psilotum nudum (Whisk fern).